A 714-amino-acid chain; its full sequence is MEMASAFTLNVRLDNIAIITIDVPGEKMNTLKAEFASQVRAIIKQLRENKELRGVVFISAKPDNFIAGADINMIGNCKTAQEAEVLARQGQQLMAEIHALPVPVIAAIHGACLGGGLELALACHGRVCTDDAKTVLGLPEVQLGLLPGSGGTQRLPRLIGVSTALEMILTGKQLRAKQALKLGLVDDVVPQSILLEAAVELAKQDRPSSRPLPVRERILAGPLGRALLFKMVGKKTEHKTQGNYPATERILEVVETGLAQGTSSGYDAEARAFGELAMTPQSQALRNIFFASTEVKKDPGSDAPPAPLNSVGILGGGLMGGGIAYVTACKAGLPVRIKDINPQGINHALKYSWDQLEGKVRRRHLKASERDKQLALISGTTDYCGFAHRDLIIEAVFENLELKQQMVAEVEQNCATHTIFASNTSSLPIGDIAAHAARPEQVIGLHFFSPVEKMPLVEIIPHASTSAQTIATTVKLAKKQGKTPIVVRDKAGFYVNRILAPYINEAIRMLTEGERIEHIDAALVKFGFPVGPIQLLDEVGIDTGTKIIPVLEAAYGERFSAPANVVSSILNDDRKGRKNGRGFYLYGQKGRKSKKQVDPAIYPLIGAQGQGRLSAPQVAERCVMLMLNEAVRCLDEQVIRSVRDGDIGAVFGIGFPPFLGGPFRYIDSLGAGEVVAIMQRLATQYGSRFTPCERLVEMSKRGESFWKTTATDLQ.

The segment at M1–P190 is enoyl-CoA hydratase. The 3-hydroxyacyl-CoA dehydrogenase stretch occupies residues A306–Q714.

In the N-terminal section; belongs to the enoyl-CoA hydratase/isomerase family. This sequence in the central section; belongs to the 3-hydroxyacyl-CoA dehydrogenase family. Heterotetramer of two alpha chains (FadJ) and two beta chains (FadI).

Its subcellular location is the cytoplasm. The enzyme catalyses a (3S)-3-hydroxyacyl-CoA = a (2E)-enoyl-CoA + H2O. The catalysed reaction is a 4-saturated-(3S)-3-hydroxyacyl-CoA = a (3E)-enoyl-CoA + H2O. It catalyses the reaction a (3S)-3-hydroxyacyl-CoA + NAD(+) = a 3-oxoacyl-CoA + NADH + H(+). It carries out the reaction (3S)-3-hydroxybutanoyl-CoA = (3R)-3-hydroxybutanoyl-CoA. It functions in the pathway lipid metabolism; fatty acid beta-oxidation. Catalyzes the formation of a hydroxyacyl-CoA by addition of water on enoyl-CoA. Also exhibits 3-hydroxyacyl-CoA epimerase and 3-hydroxyacyl-CoA dehydrogenase activities. The polypeptide is Fatty acid oxidation complex subunit alpha (Escherichia coli O7:K1 (strain IAI39 / ExPEC)).